Here is a 1189-residue protein sequence, read N- to C-terminus: Pesticidal crystal protein Cry1Ca (1189 aa).

The protein belongs to the delta endotoxin family.

Promotes colloidosmotic lysis by binding to the midgut epithelial cells of many lepidopteran larvae including Spodoptera species. The sequence is that of Pesticidal crystal protein Cry1Ca (cry1Ca) from Bacillus thuringiensis subsp. aizawai.